The primary structure comprises 205 residues: Large ribosomal subunit protein bL9 (205 aa).

Residues 160–205 form a disordered region; it reads RDRKSRNAAAASEVQDAPVEDGGDEVVSVDSVAAEDGGADASGGTA. Low complexity predominate over residues 184–195; sequence EVVSVDSVAAED.

The protein belongs to the bacterial ribosomal protein bL9 family.

In terms of biological role, binds to the 23S rRNA. In Anaplasma phagocytophilum (strain HZ), this protein is Large ribosomal subunit protein bL9.